The chain runs to 296 residues: GTPase Era (296 aa).

The Era-type G domain maps to 3 to 170; it reads KSGFVTIVGR…KELMFKYIPE (168 aa). The interval 11 to 18 is G1; that stretch reads GRPNVGKS. 11–18 contacts GTP; sequence GRPNVGKS. The interval 37–41 is G2; sequence QTTRN. The segment at 58–61 is G3; the sequence is DTPG. Residues 58 to 62 and 120 to 123 each bind GTP; these read DTPGI and NKID. The G4 stretch occupies residues 120–123; the sequence is NKID. The tract at residues 149–151 is G5; sequence ISA. The region spanning 201–278 is the KH type-2 domain; it reads LSEEVPHGIA…YIRLWVKVKE (78 aa).

The protein belongs to the TRAFAC class TrmE-Era-EngA-EngB-Septin-like GTPase superfamily. Era GTPase family. In terms of assembly, monomer.

The protein resides in the cytoplasm. It is found in the cell membrane. Its function is as follows. An essential GTPase that binds both GDP and GTP, with rapid nucleotide exchange. Plays a role in 16S rRNA processing and 30S ribosomal subunit biogenesis and possibly also in cell cycle regulation and energy metabolism. The protein is GTPase Era of Clostridium botulinum (strain Langeland / NCTC 10281 / Type F).